The chain runs to 200 residues: 3-isopropylmalate dehydratase small subunit (200 aa).

Belongs to the LeuD family. LeuD type 1 subfamily. Heterodimer of LeuC and LeuD.

The enzyme catalyses (2R,3S)-3-isopropylmalate = (2S)-2-isopropylmalate. It participates in amino-acid biosynthesis; L-leucine biosynthesis; L-leucine from 3-methyl-2-oxobutanoate: step 2/4. Catalyzes the isomerization between 2-isopropylmalate and 3-isopropylmalate, via the formation of 2-isopropylmaleate. The sequence is that of 3-isopropylmalate dehydratase small subunit from Campylobacter jejuni subsp. doylei (strain ATCC BAA-1458 / RM4099 / 269.97).